The chain runs to 352 residues: S-adenosylmethionine:tRNA ribosyltransferase-isomerase (352 aa).

It belongs to the QueA family. As to quaternary structure, monomer.

It is found in the cytoplasm. The catalysed reaction is 7-aminomethyl-7-carbaguanosine(34) in tRNA + S-adenosyl-L-methionine = epoxyqueuosine(34) in tRNA + adenine + L-methionine + 2 H(+). The protein operates within tRNA modification; tRNA-queuosine biosynthesis. Its function is as follows. Transfers and isomerizes the ribose moiety from AdoMet to the 7-aminomethyl group of 7-deazaguanine (preQ1-tRNA) to give epoxyqueuosine (oQ-tRNA). This Cupriavidus necator (strain ATCC 17699 / DSM 428 / KCTC 22496 / NCIMB 10442 / H16 / Stanier 337) (Ralstonia eutropha) protein is S-adenosylmethionine:tRNA ribosyltransferase-isomerase.